The primary structure comprises 512 residues: ATP synthase subunit alpha, chloroplastic (512 aa).

Residue 170–177 coordinates ATP; that stretch reads GDRQTGKT.

It belongs to the ATPase alpha/beta chains family. F-type ATPases have 2 components, CF(1) - the catalytic core - and CF(0) - the membrane proton channel. CF(1) has five subunits: alpha(3), beta(3), gamma(1), delta(1), epsilon(1). CF(0) has four main subunits: a, b, b' and c.

The protein localises to the plastid. The protein resides in the chloroplast thylakoid membrane. The enzyme catalyses ATP + H2O + 4 H(+)(in) = ADP + phosphate + 5 H(+)(out). In terms of biological role, produces ATP from ADP in the presence of a proton gradient across the membrane. The alpha chain is a regulatory subunit. The chain is ATP synthase subunit alpha, chloroplastic from Chaetosphaeridium globosum (Charophycean green alga).